Consider the following 289-residue polypeptide: BTB/POZ domain-containing protein KCTD7 (289 aa).

The segment at 1 to 35 (MVVVTGREPDSRRQDGAMSSSDAEDDFLEPATPTA) is disordered. The BTB domain maps to 51-149 (EVVPLNIGGA…QLENMQPLKG (99 aa)).

Interacts with CUL3.

It is found in the cell membrane. The protein resides in the cytoplasm. The protein localises to the cytosol. May be involved in the control of excitability of cortical neurons. The sequence is that of BTB/POZ domain-containing protein KCTD7 (KCTD7) from Homo sapiens (Human).